The chain runs to 376 residues: MSKAVLVLEDGRVFTGRPFGATGQALGEAVFSTGMSGYQETLTDPSYHRQIVVATAPQIGNTGWNGEDSESRGERIWVAGYAVRDPSPRASNWRATGTLEDELIRQRIVGIAGIDTRAVVRHLRSRGSMKAGVFSDGALAEPADLIARVRAQQSMLGADLAGEVSTAEPYVVEPDGPPGVSRFTVAALDLGIKTNTPRNFARRGIRCHVLPASTTFEQIAELNPHGVFLSNGPGDPATADHVVALTREVLGAGIPLFGICFGNQILGRALGLSTYKMVFGHRGINIPVVDHATGRVAVTAQNHGFALQGEAGQSFATPFGPAVVSHTCANDGVVEGVKLVDGRAFSVQYHPEAAAGPHDAEYLFDQFVELMAGEGR.

A nucleophile region spans residues 1 to 181 (MSKAVLVLED…VEPDGPPGVS (181 aa)). A CPSase region spans residues 1–183 (MSKAVLVLED…PDGPPGVSRF (183 aa)). L-glutamine contacts are provided by serine 46, glycine 232, glycine 234, phenylalanine 261, glutamine 264, asparagine 302, glycine 304, and phenylalanine 305. Positions 184–376 (TVAALDLGIK…FVELMAGEGR (193 aa)) constitute a Glutamine amidotransferase type-1 domain. Residues histidine 350 and glutamate 352 contribute to the active site.

Belongs to the CarA family. In terms of assembly, composed of two chains; the small (or glutamine) chain promotes the hydrolysis of glutamine to ammonia, which is used by the large (or ammonia) chain to synthesize carbamoyl phosphate. Tetramer of heterodimers (alpha,beta)4.

The catalysed reaction is hydrogencarbonate + L-glutamine + 2 ATP + H2O = carbamoyl phosphate + L-glutamate + 2 ADP + phosphate + 2 H(+). The enzyme catalyses L-glutamine + H2O = L-glutamate + NH4(+). It participates in amino-acid biosynthesis; L-arginine biosynthesis; carbamoyl phosphate from bicarbonate: step 1/1. The protein operates within pyrimidine metabolism; UMP biosynthesis via de novo pathway; (S)-dihydroorotate from bicarbonate: step 1/3. In terms of biological role, small subunit of the glutamine-dependent carbamoyl phosphate synthetase (CPSase). CPSase catalyzes the formation of carbamoyl phosphate from the ammonia moiety of glutamine, carbonate, and phosphate donated by ATP, constituting the first step of 2 biosynthetic pathways, one leading to arginine and/or urea and the other to pyrimidine nucleotides. The small subunit (glutamine amidotransferase) binds and cleaves glutamine to supply the large subunit with the substrate ammonia. The protein is Carbamoyl phosphate synthase small chain of Mycobacterium tuberculosis (strain CDC 1551 / Oshkosh).